The sequence spans 373 residues: tRNA-specific 2-thiouridylase MnmA (373 aa).

ATP-binding positions include glycine 12–serine 19 and methionine 38. The segment at asparagine 98–aspartate 100 is interaction with target base in tRNA. The Nucleophile role is filled by cysteine 103. Cysteine 103 and cysteine 200 are disulfide-bonded. Glycine 127 contributes to the ATP binding site. The segment at lysine 150–glutamine 152 is interaction with tRNA. Cysteine 200 serves as the catalytic Cysteine persulfide intermediate. Positions arginine 312 to tyrosine 313 are interaction with tRNA.

This sequence belongs to the MnmA/TRMU family.

The protein resides in the cytoplasm. It carries out the reaction S-sulfanyl-L-cysteinyl-[protein] + uridine(34) in tRNA + AH2 + ATP = 2-thiouridine(34) in tRNA + L-cysteinyl-[protein] + A + AMP + diphosphate + H(+). In terms of biological role, catalyzes the 2-thiolation of uridine at the wobble position (U34) of tRNA, leading to the formation of s(2)U34. This is tRNA-specific 2-thiouridylase MnmA from Streptococcus pyogenes serotype M1.